Consider the following 267-residue polypeptide: Type III pantothenate kinase (267 aa).

6-13 (DSGNSRLK) provides a ligand contact to ATP. Substrate is bound by residues Y96 and 103 to 106 (GADR). The active-site Proton acceptor is the D105. An ATP-binding site is contributed by T131. Substrate is bound at residue T181.

Belongs to the type III pantothenate kinase family. Homodimer. NH4(+) serves as cofactor. The cofactor is K(+).

The protein localises to the cytoplasm. It catalyses the reaction (R)-pantothenate + ATP = (R)-4'-phosphopantothenate + ADP + H(+). The protein operates within cofactor biosynthesis; coenzyme A biosynthesis; CoA from (R)-pantothenate: step 1/5. Catalyzes the phosphorylation of pantothenate (Pan), the first step in CoA biosynthesis. This Bordetella bronchiseptica (strain ATCC BAA-588 / NCTC 13252 / RB50) (Alcaligenes bronchisepticus) protein is Type III pantothenate kinase.